The primary structure comprises 283 residues: Protease HtpX (283 aa).

A run of 2 helical transmembrane segments spans residues 4–24 (ILLF…ILSV) and 33–53 (GGIL…SLFL). Position 139 (histidine 139) interacts with Zn(2+). The active site involves glutamate 140. Zn(2+) is bound at residue histidine 143. The next 2 helical transmembrane spans lie at 147-167 (GDMV…IFLS) and 190-210 (IYFL…SIIA). Glutamate 218 serves as a coordination point for Zn(2+).

It belongs to the peptidase M48B family. It depends on Zn(2+) as a cofactor.

Its subcellular location is the cell inner membrane. The polypeptide is Protease HtpX (Haemophilus influenzae (strain PittEE)).